The sequence spans 782 residues: Endonuclease MutS2 (782 aa).

336 to 343 (GPNTGGKT) is a binding site for ATP. Positions 707 to 782 (LDLRGYRYEE…GFGVTVAELK (76 aa)) constitute a Smr domain.

The protein belongs to the DNA mismatch repair MutS family. MutS2 subfamily. As to quaternary structure, homodimer. Binds to stalled ribosomes, contacting rRNA.

Endonuclease that is involved in the suppression of homologous recombination and thus may have a key role in the control of bacterial genetic diversity. Functionally, acts as a ribosome collision sensor, splitting the ribosome into its 2 subunits. Detects stalled/collided 70S ribosomes which it binds and splits by an ATP-hydrolysis driven conformational change. Acts upstream of the ribosome quality control system (RQC), a ribosome-associated complex that mediates the extraction of incompletely synthesized nascent chains from stalled ribosomes and their subsequent degradation. Probably generates substrates for RQC. The sequence is that of Endonuclease MutS2 from Staphylococcus epidermidis (strain ATCC 12228 / FDA PCI 1200).